The sequence spans 461 residues: Gustatory and pheromone receptor 32a (461 aa).

The Cytoplasmic portion of the chain corresponds to 1-100 (MSPNTWVIEM…YSFFVRGVVH (100 aa)). A helical transmembrane segment spans residues 101–121 (ALTIFNVYSLFTPISAQLFFS). At 122–127 (YRETDN) the chain is on the extracellular side. A helical membrane pass occupies residues 128 to 148 (VNQWIELLLCILTYTLTVFVC). Residues 149-180 (AHNTTSMLRIMNEILQLDEEVRRQFGANLSQN) lie on the Cytoplasmic side of the membrane. Residues 181–201 (FGFLVKFLVGITACQAYIIVL) form a helical membrane-spanning segment. Residues 202-214 (KIYAVQGEITPTS) lie on the Extracellular side of the membrane. The helical transmembrane segment at 215-235 (YILLAFYGIQNGLTATYIVFA) threads the bilayer. Residues 236–317 (SALLRIVYIR…YKGINDCCNL (82 aa)) lie on the Cytoplasmic side of the membrane. The chain crosses the membrane as a helical span at residues 318–338 (ILVSFLGYSFYTVTTNCYNLF). Topologically, residues 339–348 (VQITGKGMVS) are extracellular. Residues 349-369 (PNILQWCFAWLCLHVSLLALL) form a helical membrane-spanning segment. The Cytoplasmic segment spans residues 370 to 414 (SRSCGLTTTEANATSQILARVYAKSKEYQNIIDKFLTKSIKQEVQ). Residues 415–435 (FTAYGFFAIDNSTLFKIFSAV) form a helical membrane-spanning segment. Topologically, residues 436–461 (TTYLVILIQFKQLEDSKVEDPVPEQT) are extracellular.

The protein belongs to the insect chemoreceptor superfamily. Gustatory receptor (GR) family. Gr21a subfamily. As to expression, expressed in the adult labellar chemosensory neurons. Expressed in tarsal neurons for male-male courtship suppression. In larvae, is expressed in neurons of the terminal external chemosensory organ, and the dorsal and posterior external chemosensory organs.

Its subcellular location is the cell membrane. Gustatory receptor which mediates acceptance or avoidance behavior, depending on its substrates. Required for the response to N,N-Diethyl-meta-toluamide (DEET), the most widely used insect repellent worldwide. Functions as a pheromone receptor for a male inhibitory pheromone and promotes male-male aggression and suppresses male-male courtship. Also promotes preferentially virgin females courting over mated females. This chain is Gustatory and pheromone receptor 32a (Gr32a), found in Drosophila melanogaster (Fruit fly).